The chain runs to 82 residues: Immediate early response 3-interacting protein 1 (82 aa).

Transmembrane regions (helical) follow at residues 2-22 and 62-82; these read AFTL…IAVL and VMRV…LLFG.

This sequence belongs to the YOS1 family.

The protein localises to the endoplasmic reticulum membrane. Regulator of endoplasmic reticulum secretion that acts as a key determinant of brain size. Required for secretion of extracellular matrix proteins. Required for correct brain development by depositing sufficient extracellular matrix proteins for tissue integrity and the proliferation of neural progenitors. Acts as a regulator of the unfolded protein response (UPR). The protein is Immediate early response 3-interacting protein 1 of Bos taurus (Bovine).